The following is a 163-amino-acid chain: Type-2 ice-structuring protein (163 aa).

Residues 1-17 form the signal peptide; it reads MLTVSLLVCAMMALTQA. A propeptide spanning residues 18 to 34 is cleaved from the precursor; the sequence is NDDKILKGTATEAGPVS. Positions 39 to 163 constitute a C-type lectin domain; sequence PNCPAGWQPL…SHKSVCAMTF (125 aa). 5 disulfide bridges follow: Cys-41/Cys-52, Cys-69/Cys-159, Cys-103/Cys-134, Cys-123/Cys-145, and Cys-135/Cys-151.

Post-translationally, the N-terminus is blocked.

The protein resides in the secreted. In terms of biological role, antifreeze proteins lower the blood freezing point. The polypeptide is Type-2 ice-structuring protein (Hemitripterus americanus (Sea raven)).